Here is a 363-residue protein sequence, read N- to C-terminus: MDNFLPFPSSNANSVQELSMDPNNNRSHFTTVPTYDHHQAQPHHFLPPFSYPVEQMAAVMNPQPVYLSECYPQIPVTQTGSEFGSLVGNPCLWQERGGFLDPRMTKMARINRKNAMMRSRNNSSPNSSPSELVDSKRQLMMLNLKNNVQISDKKDSYQQSTFDNKKLRVLCEKELKNSDVGSLGRIVLPKRDAEANLPKLSDKEGIVVQMRDVFSMQSWSFKYKFWSNNKSRMYVLENTGEFVKQNGAEIGDFLTIYEDESKNLYFAMNGNSGKQNEGRENESRERNHYEEAMLDYIPRDEEEASIAMLIGNLNDHYPIPNDLMDLTTDLQHHQATSSSMPPEDHAYVGSSDDQVSFNDFEWW.

The interval 1-27 (MDNFLPFPSSNANSVQELSMDPNNNRS) is disordered. Residues 8 to 27 (PSSNANSVQELSMDPNNNRS) are compositionally biased toward polar residues. Positions 171-272 (CEKELKNSDV…NLYFAMNGNS (102 aa)) form a DNA-binding region, TF-B3. Residues 331–351 (QHHQATSSSMPPEDHAYVGSS) are disordered.

It is found in the nucleus. Transcription regulator that plays a central role in embryo development. Required for the maintenance of suspensor morphology, specification of cotyledon identity, progression through the maturation phase and suppression of premature germination. Ectopic expression is sufficient to promote somatic embryogenesis. This chain is B3 domain-containing transcription factor LEC2 (LEC2), found in Arabidopsis thaliana (Mouse-ear cress).